Here is a 183-residue protein sequence, read N- to C-terminus: Putative 3-methyladenine DNA glycosylase (183 aa).

The protein belongs to the DNA glycosylase MPG family.

The protein is Putative 3-methyladenine DNA glycosylase of Rickettsia conorii (strain ATCC VR-613 / Malish 7).